The primary structure comprises 205 residues: Holliday junction branch migration complex subunit RuvA (205 aa).

Positions 1 to 64 (MIGRLRGVLV…EDAQLLYGFI (64 aa)) are domain I. The domain II stretch occupies residues 65-143 (TKQERALFRL…SLMEASAGSE (79 aa)). The segment at 144 to 156 (REFVLQSNYSPTP) is flexible linker. The interval 157–205 (TVNSAEEDAISALISLGYKPPQASKSVSAAYKEGMDSETLIKAALKSML) is domain III.

This sequence belongs to the RuvA family. In terms of assembly, homotetramer. Forms an RuvA(8)-RuvB(12)-Holliday junction (HJ) complex. HJ DNA is sandwiched between 2 RuvA tetramers; dsDNA enters through RuvA and exits via RuvB. An RuvB hexamer assembles on each DNA strand where it exits the tetramer. Each RuvB hexamer is contacted by two RuvA subunits (via domain III) on 2 adjacent RuvB subunits; this complex drives branch migration. In the full resolvosome a probable DNA-RuvA(4)-RuvB(12)-RuvC(2) complex forms which resolves the HJ.

It localises to the cytoplasm. In terms of biological role, the RuvA-RuvB-RuvC complex processes Holliday junction (HJ) DNA during genetic recombination and DNA repair, while the RuvA-RuvB complex plays an important role in the rescue of blocked DNA replication forks via replication fork reversal (RFR). RuvA specifically binds to HJ cruciform DNA, conferring on it an open structure. The RuvB hexamer acts as an ATP-dependent pump, pulling dsDNA into and through the RuvAB complex. HJ branch migration allows RuvC to scan DNA until it finds its consensus sequence, where it cleaves and resolves the cruciform DNA. In Shewanella sp. (strain W3-18-1), this protein is Holliday junction branch migration complex subunit RuvA.